The primary structure comprises 122 residues: Urocortin (122 aa).

An N-terminal signal peptide occupies residues 1–25; sequence MIQRGRATLLVALLLLAQLRPESSQ. A propeptide spanning residues 26 to 80 is cleaved from the precursor; that stretch reads WSPAAAAATGVQDPNLRWSPGVRNQGGGVRALLLLLAERFPRRAGSEPAGERQRR. Val120 bears the Valine amide mark.

This sequence belongs to the sauvagine/corticotropin-releasing factor/urotensin I family. In terms of assembly, interacts with CRHR1 and CRHR2 (via their N-terminal extracellular domain). In terms of tissue distribution, in the organ of Corti, detected in the inner hair cell region (at protein level). Expressed in skin (at protein level).

Its subcellular location is the secreted. Acts in vitro to stimulate the secretion of adrenocorticotropic hormone (ACTH). Binds with high affinity to CRF receptor types 1, 2-alpha, and 2-beta. Plays a role in the establishment of normal hearing thresholds. Reduces food intake and regulates ghrelin levels in gastric body and plasma. The protein is Urocortin (Ucn) of Mus musculus (Mouse).